Here is a 534-residue protein sequence, read N- to C-terminus: CTP synthase (534 aa).

The amidoligase domain stretch occupies residues 1 to 267 (MTKYIFVTGG…DQIVCDHLKL (267 aa)). Position 13 (S13) interacts with CTP. Residue S13 coordinates UTP. Position 14–19 (14–19 (SIGKGI)) interacts with ATP. Y54 contributes to the L-glutamine binding site. D71 serves as a coordination point for ATP. Residues D71 and E141 each coordinate Mg(2+). CTP contacts are provided by residues 148–150 (DIE), 188–193 (KTKPTQ), and K224. UTP contacts are provided by residues 188-193 (KTKPTQ) and K224. Position 240–242 (240–242 (RDV)) interacts with ATP. The Glutamine amidotransferase type-1 domain occupies 292–534 (KIALVGKYVE…FVTAAIKNSN (243 aa)). G354 is an L-glutamine binding site. C381 functions as the Nucleophile; for glutamine hydrolysis in the catalytic mechanism. L-glutamine contacts are provided by residues 382-385 (LGMQ), E405, and R463. Active-site residues include H508 and E510.

This sequence belongs to the CTP synthase family. Homotetramer.

The catalysed reaction is UTP + L-glutamine + ATP + H2O = CTP + L-glutamate + ADP + phosphate + 2 H(+). The enzyme catalyses L-glutamine + H2O = L-glutamate + NH4(+). It catalyses the reaction UTP + NH4(+) + ATP = CTP + ADP + phosphate + 2 H(+). The protein operates within pyrimidine metabolism; CTP biosynthesis via de novo pathway; CTP from UDP: step 2/2. Its activity is regulated as follows. Allosterically activated by GTP, when glutamine is the substrate; GTP has no effect on the reaction when ammonia is the substrate. The allosteric effector GTP functions by stabilizing the protein conformation that binds the tetrahedral intermediate(s) formed during glutamine hydrolysis. Inhibited by the product CTP, via allosteric rather than competitive inhibition. In terms of biological role, catalyzes the ATP-dependent amination of UTP to CTP with either L-glutamine or ammonia as the source of nitrogen. Regulates intracellular CTP levels through interactions with the four ribonucleotide triphosphates. This Streptococcus pyogenes serotype M1 protein is CTP synthase.